A 186-amino-acid polypeptide reads, in one-letter code: Riboflavin kinase (186 aa).

Mg(2+) contacts are provided by threonine 42 and asparagine 44. Glutamate 123 (nucleophile) is an active-site residue.

This sequence belongs to the flavokinase family. Requires Zn(2+) as cofactor. Mg(2+) serves as cofactor.

It catalyses the reaction riboflavin + ATP = FMN + ADP + H(+). It functions in the pathway cofactor biosynthesis; FMN biosynthesis; FMN from riboflavin (ATP route): step 1/1. Functionally, catalyzes the phosphorylation of riboflavin (vitamin B2) to form flavin mononucleotide (FMN) coenzyme. This Eremothecium gossypii (strain ATCC 10895 / CBS 109.51 / FGSC 9923 / NRRL Y-1056) (Yeast) protein is Riboflavin kinase (FMN1).